The primary structure comprises 181 residues: Adenine phosphoribosyltransferase (181 aa).

It belongs to the purine/pyrimidine phosphoribosyltransferase family. As to quaternary structure, homodimer.

It is found in the cytoplasm. The enzyme catalyses AMP + diphosphate = 5-phospho-alpha-D-ribose 1-diphosphate + adenine. It functions in the pathway purine metabolism; AMP biosynthesis via salvage pathway; AMP from adenine: step 1/1. Catalyzes a salvage reaction resulting in the formation of AMP, that is energically less costly than de novo synthesis. The sequence is that of Adenine phosphoribosyltransferase from Methylobacterium sp. (strain 4-46).